We begin with the raw amino-acid sequence, 312 residues long: Malate dehydrogenase (312 aa).

Residues 7-13 (GAAGGIG) and Asp-34 contribute to the NAD(+) site. Positions 81 and 87 each coordinate substrate. NAD(+)-binding positions include Asn-94 and 117-119 (ITN). Substrate-binding residues include Asn-119 and Arg-153. The Proton acceptor role is filled by His-177. Met-227 lines the NAD(+) pocket.

It belongs to the LDH/MDH superfamily. MDH type 1 family. Homodimer.

It carries out the reaction (S)-malate + NAD(+) = oxaloacetate + NADH + H(+). In terms of biological role, catalyzes the reversible oxidation of malate to oxaloacetate. This chain is Malate dehydrogenase, found in Escherichia coli (strain SE11).